Consider the following 403-residue polypeptide: Protein-export membrane protein SecD (403 aa).

The next 6 helical transmembrane spans lie at 13–33, 245–265, 285–305, 306–326, 347–367, and 368–388; these read LLVITAVWIVAATSLAVKGVN, FLKMAMIAGAIAFAAVSVIIA, VVFLIGLASLTGFTIDLPALA, GIILSIGSGVDDLIVITDEIV, VVLASFATLAAAMAVLFVAGM, and GLLKGFAIMTIAGAFYGVVIT.

The protein belongs to the SecD/SecF family. SecD subfamily. As to quaternary structure, part of the protein translocation apparatus. Forms a complex with SecF.

The protein localises to the cell membrane. In terms of biological role, involved in protein export. This chain is Protein-export membrane protein SecD, found in Methanopyrus kandleri (strain AV19 / DSM 6324 / JCM 9639 / NBRC 100938).